The sequence spans 175 residues: ATP-dependent protease subunit HslV (175 aa).

Residue Thr2 is part of the active site. Na(+) is bound by residues Ala156, Cys159, and Thr162.

It belongs to the peptidase T1B family. HslV subfamily. In terms of assembly, a double ring-shaped homohexamer of HslV is capped on each side by a ring-shaped HslU homohexamer. The assembly of the HslU/HslV complex is dependent on binding of ATP.

Its subcellular location is the cytoplasm. The enzyme catalyses ATP-dependent cleavage of peptide bonds with broad specificity.. Allosterically activated by HslU binding. Its function is as follows. Protease subunit of a proteasome-like degradation complex believed to be a general protein degrading machinery. The polypeptide is ATP-dependent protease subunit HslV (Rhizobium etli (strain CIAT 652)).